The following is a 276-amino-acid chain: SRR1-like protein (276 aa).

The residue at position 30 (Ser-30) is a Phosphoserine. Phosphotyrosine is present on Tyr-34.

This sequence belongs to the SRR1 family.

Possible regulator involved in a circadian clock input pathway. The sequence is that of SRR1-like protein from Drosophila melanogaster (Fruit fly).